A 329-amino-acid chain; its full sequence is Ribosomal protein L11 methyltransferase (329 aa).

Residues Thr177, Gly198, Asp220, and Asn264 each contribute to the S-adenosyl-L-methionine site.

Belongs to the methyltransferase superfamily. PrmA family.

The protein resides in the cytoplasm. The catalysed reaction is L-lysyl-[protein] + 3 S-adenosyl-L-methionine = N(6),N(6),N(6)-trimethyl-L-lysyl-[protein] + 3 S-adenosyl-L-homocysteine + 3 H(+). Its function is as follows. Methylates ribosomal protein L11. The protein is Ribosomal protein L11 methyltransferase of Helicobacter pylori (strain J99 / ATCC 700824) (Campylobacter pylori J99).